The primary structure comprises 146 residues: VHLSAEEKAAVTGLWGKVNVEEVGGEALGRLLVVYPWTQRFFESFGDLSSAAAVMGNPKVKAHGKKVLTSFSEGLSHLDNLKGTFAKLSELHCDKLHVDPENFRLLGNMIVITLAHHYGPEFGPQTQAAFQKVVAGVANALAHKYH.

An N-acetylvaline modification is found at Val1. In terms of domain architecture, Globin spans 2-146 (HLSAEEKAAV…VANALAHKYH (145 aa)). Thr12 carries the post-translational modification Phosphothreonine. Ser44 carries the post-translational modification Phosphoserine. Lys59 carries the N6-acetyllysine modification. His63 lines the heme b pocket. An N6-acetyllysine modification is found at Lys82. His92 is a heme b binding site. Position 93 is an S-nitrosocysteine (Cys93). Lys144 bears the N6-acetyllysine mark.

It belongs to the globin family. As to quaternary structure, heterotetramer of two alpha chains and two beta chains. In terms of tissue distribution, red blood cells.

Involved in oxygen transport from the lung to the various peripheral tissues. This Ctenodactylus gundi (Northern gundi) protein is Hemoglobin subunit beta (HBB).